Here is a 414-residue protein sequence, read N- to C-terminus: Probable 1-acylglycerol-3-phosphate O-acyltransferase (414 aa).

The AB hydrolase-1 domain occupies 117-382 (PTLVMVHGYG…GGHFVFIDNP (266 aa)). Positions 193–197 (GHSFG) match the GXSXG motif. The HXXXXD motif motif lies at 375–380 (HFVFID).

This sequence belongs to the peptidase S33 family. ABHD4/ABHD5 subfamily.

It localises to the cytoplasm. It carries out the reaction a 1-acyl-sn-glycero-3-phosphate + an acyl-CoA = a 1,2-diacyl-sn-glycero-3-phosphate + CoA. Its function is as follows. Lysophosphatidic acid acyltransferase which functions in phosphatidic acid biosynthesis. May regulate neutral lipid accumulation and participate in the regulation of lipid turnover in vegetative cells. May possess additional triacylglycerol lipase and phospholipase A2 activities in vitro. The sequence is that of Probable 1-acylglycerol-3-phosphate O-acyltransferase from Oryza sativa subsp. japonica (Rice).